A 446-amino-acid chain; its full sequence is Phosphoglucosamine mutase (446 aa).

Ser102 serves as the catalytic Phosphoserine intermediate. 4 residues coordinate Mg(2+): Ser102, Asp241, Asp243, and Asp245. Ser102 carries the post-translational modification Phosphoserine.

This sequence belongs to the phosphohexose mutase family. Requires Mg(2+) as cofactor. Post-translationally, activated by phosphorylation.

The enzyme catalyses alpha-D-glucosamine 1-phosphate = D-glucosamine 6-phosphate. Catalyzes the conversion of glucosamine-6-phosphate to glucosamine-1-phosphate. In Yersinia enterocolitica serotype O:8 / biotype 1B (strain NCTC 13174 / 8081), this protein is Phosphoglucosamine mutase.